The primary structure comprises 274 residues: Large ribosomal subunit protein uL2cz (274 aa).

Disordered stretches follow at residues 1–25 (MAIH…VKSN) and 224–274 (NPVD…RRSK). A compositionally biased stretch (polar residues) spans 7-25 (KTSTPSTRNGTVDSQVKSN).

Belongs to the universal ribosomal protein uL2 family. In terms of assembly, part of the 50S ribosomal subunit.

Its subcellular location is the plastid. It localises to the chloroplast. The sequence is that of Large ribosomal subunit protein uL2cz (rpl2-A) from Coffea arabica (Arabian coffee).